The following is a 561-amino-acid chain: DNA ligase B (561 aa).

Lys-125 serves as the catalytic N6-AMP-lysine intermediate.

The protein belongs to the NAD-dependent DNA ligase family. LigB subfamily.

The enzyme catalyses NAD(+) + (deoxyribonucleotide)n-3'-hydroxyl + 5'-phospho-(deoxyribonucleotide)m = (deoxyribonucleotide)n+m + AMP + beta-nicotinamide D-nucleotide.. Catalyzes the formation of phosphodiester linkages between 5'-phosphoryl and 3'-hydroxyl groups in double-stranded DNA using NAD as a coenzyme and as the energy source for the reaction. The protein is DNA ligase B of Escherichia coli O127:H6 (strain E2348/69 / EPEC).